A 192-amino-acid chain; its full sequence is Ion-translocating oxidoreductase complex subunit A (192 aa).

A run of 6 helical transmembrane segments spans residues 5 to 25, 39 to 59, 72 to 92, 102 to 122, 134 to 154, and 171 to 191; these read ILLL…FLGL, IGMG…AYLV, LRTM…EMVV, LLGI…VALL, IIYG…FASM, and SIAM…TGLV.

It belongs to the NqrDE/RnfAE family. The complex is composed of six subunits: RnfA, RnfB, RnfC, RnfD, RnfE and RnfG.

The protein localises to the cell inner membrane. In terms of biological role, part of a membrane-bound complex that couples electron transfer with translocation of ions across the membrane. The chain is Ion-translocating oxidoreductase complex subunit A from Vibrio vulnificus (strain CMCP6).